We begin with the raw amino-acid sequence, 95 residues long: NADH-quinone oxidoreductase subunit K (95 aa).

Helical transmembrane passes span 1 to 21 (MSYL…VLTR), 25 to 45 (ILVF…LVGF), and 59 to 79 (MVIA…VAIF).

The protein belongs to the complex I subunit 4L family. In terms of assembly, NDH-1 is composed of 15 different subunits. Subunits NuoA, H, J, K, L, M, N constitute the membrane sector of the complex.

The protein localises to the cell inner membrane. The catalysed reaction is a quinone + NADH + 5 H(+)(in) = a quinol + NAD(+) + 4 H(+)(out). Functionally, NDH-1 shuttles electrons from NADH, via FMN and iron-sulfur (Fe-S) centers, to quinones in the respiratory chain. The immediate electron acceptor for the enzyme in this species is believed to be a menaquinone. Couples the redox reaction to proton translocation (for every two electrons transferred, four hydrogen ions are translocated across the cytoplasmic membrane), and thus conserves the redox energy in a proton gradient. The protein is NADH-quinone oxidoreductase subunit K of Thermus thermophilus (strain ATCC BAA-163 / DSM 7039 / HB27).